The chain runs to 147 residues: Large ribosomal subunit protein uL13 (147 aa).

The protein belongs to the universal ribosomal protein uL13 family. As to quaternary structure, part of the 50S ribosomal subunit.

This protein is one of the early assembly proteins of the 50S ribosomal subunit, although it is not seen to bind rRNA by itself. It is important during the early stages of 50S assembly. The polypeptide is Large ribosomal subunit protein uL13 (Corynebacterium diphtheriae (strain ATCC 700971 / NCTC 13129 / Biotype gravis)).